We begin with the raw amino-acid sequence, 67 residues long: uncharacterized protein (67 aa).

This is an uncharacterized protein from Caenorhabditis elegans.